Reading from the N-terminus, the 383-residue chain is 3-ketosteroid-9-alpha-monooxygenase, oxygenase component (383 aa).

Positions 24-126 constitute a Rieske domain; the sequence is WHCLGPVKNF…TDVRGGLLFV (103 aa). Positions 65, 67, 84, and 87 each coordinate [2Fe-2S] cluster. Fe cation is bound by residues Asn173, His179, His184, and Asp302.

In terms of assembly, homotrimer. The two-component system 3-ketosteroid-9-alpha-monooxygenase is composed of an oxygenase component KshA and a reductase component KshB. [2Fe-2S] cluster serves as cofactor. The cofactor is Fe cation.

It catalyses the reaction androsta-1,4-diene-3,17-dione + 2 reduced [2Fe-2S]-[ferredoxin] + O2 + 2 H(+) = 9alpha-hydroxyandrosta-1,4-diene-3,17-dione + 2 oxidized [2Fe-2S]-[ferredoxin] + H2O. The protein operates within lipid metabolism; steroid biosynthesis. Functionally, involved in the degradation of cholesterol. Catalyzes the introduction of a 9a-hydroxyl moiety into 1,4-androstadiene-3,17-dione (ADD) to yield the 9alpha-hydroxy-1,4-androstadiene-3,17-dione (9OHADD) intermediate which spontaneously form 3-hydroxy-9,10-seconandrost-1,3,5(10)-triene-9,17-dione (HSA) via the meta-cleavage of ring B with concomitant aromatization of ring A. This chain is 3-ketosteroid-9-alpha-monooxygenase, oxygenase component (kshA), found in Mycolicibacterium smegmatis (strain ATCC 700084 / mc(2)155) (Mycobacterium smegmatis).